A 132-amino-acid polypeptide reads, in one-letter code: Snaclec bothroinsularin subunit alpha (132 aa).

Disulfide bonds link cysteine 2–cysteine 13, cysteine 30–cysteine 127, and cysteine 102–cysteine 119. Residues 9–128 (YGQYCYKFFQ…CGQQNPFVCK (120 aa)) form the C-type lectin domain.

It belongs to the snaclec family. Heterodimer of subunits alpha and beta; disulfide-linked. In terms of tissue distribution, expressed by the venom gland.

The protein resides in the secreted. Its function is as follows. Thrombin and prothrombin (F2) inhibitor. The IC(50) of thrombin-induced platelet aggregation and fibrinocoagulation is 62 and 35 nM, respectively. Its inhibitory activity is at least 10-fold lower than that observed for other thrombin inhibitors. This chain is Snaclec bothroinsularin subunit alpha, found in Bothrops insularis (Golden lancehead).